A 525-amino-acid polypeptide reads, in one-letter code: MFSLQDLCRKNIFFLPNDFSKHTLQWLGLYWKEHGSVHRAEKNSIVIQNELVLSINDALQLAGEEGDTDVVQLLLLWEGNLHYAIIGALKTEKYNLICEYHSQIQDWHVLLPLIQDPETFEKCHDLSLACDFICLLQHAVKYNMLSILVKYKEDLLNVRIRYRIQSLFVLACENRRIEIIDWIGQNLPIPEPDAIFSIAVATRDLELFSLGYKIIFDYMQRQGIFQLSNGVRMVVLNRHISMAIDNGLLPFVLETLKHGGNIHRALSYAVTHNRRKILDYLIRQKNIAPNTIERLLYLAVKNQSSRKTLNLLLSYINYKVKNVKKLVEHVVNEKSTLVLKILLEKKENLVDAVLTRLVKHSTYFQVREFIQEFSISPEKFIKIAVREKKNVLIEAISEDIWENPTERITYLKQIVHTIKYESGRRFLIDIIHSIYQSYSLKHEDILKLATFYVKYNAITHFKDLCKYLWLNRGTESKKLFLECLEIADEKEFPDIKSIVSEYINYLFTAGAITKEEIMQAYDALE.

ANK repeat units lie at residues 54–83, 129–158, 261–291, and 324–351; these read SINDALQLAGEEGDTDVVQLLLLWEGNLHY, ACDFICLLQHAVKYNMLSILVKYKEDLLNV, NIHRALSYAVTHNRRKILDYLIRQKNIAPNT, and KKLVEHVVNEKSTLVLKILLEKKENLVD.

Belongs to the asfivirus MGF 505 family.

Its function is as follows. Plays a role in virus cell tropism, and may be required for efficient virus replication in macrophages. This chain is Protein MGF 505-6R, found in Ornithodoros (relapsing fever ticks).